The following is a 128-amino-acid chain: Cytochrome c-type biogenesis protein CcmE (128 aa).

At 1–8 the chain is on the cytoplasmic side; that stretch reads MQKRVRNR. Residues 9-29 traverse the membrane as a helical; Signal-anchor for type II membrane protein segment; the sequence is LITIIICFCSACLGISIILYN. Over 30–128 the chain is Extracellular; it reads LEKNIVFFLP…KHDENYRPPQ (99 aa). 2 residues coordinate heme: His-120 and Tyr-124.

This sequence belongs to the CcmE/CycJ family.

The protein localises to the cell membrane. Heme chaperone required for the biogenesis of c-type cytochromes. Transiently binds heme delivered by CcmC and transfers the heme to apo-cytochromes in a process facilitated by CcmF and CcmH. This is Cytochrome c-type biogenesis protein CcmE from Rickettsia africae (strain ESF-5).